The following is a 225-amino-acid chain: Cytidylate kinase (225 aa).

Position 11 to 19 (11 to 19 (GPAGAGKGT)) interacts with ATP. Basic and acidic residues predominate over residues 169 to 185 (MDRIKSRIEERDARDQS). Residues 169–195 (MDRIKSRIEERDARDQSRATAPLAAAP) form a disordered region.

Belongs to the cytidylate kinase family. Type 1 subfamily.

It is found in the cytoplasm. It catalyses the reaction CMP + ATP = CDP + ADP. The enzyme catalyses dCMP + ATP = dCDP + ADP. This Magnetococcus marinus (strain ATCC BAA-1437 / JCM 17883 / MC-1) protein is Cytidylate kinase.